The following is a 937-amino-acid chain: Translation initiation factor IF-2 (937 aa).

Disordered regions lie at residues 61-156 (IQAN…KAKQ) and 171-274 (LTQS…SHKI). Residues 179–196 (AKKEISEVKKQEQEIKRH) are compositionally biased toward basic and acidic residues. Positions 197 to 208 (ENIKRRTGFRVI) are enriched in basic residues. Residues 237 to 252 (EDIKKEWQEKDKQEAK) are compositionally biased toward basic and acidic residues. Positions 436-605 (ERPPVVTIMG…LIQADIMELK (170 aa)) constitute a tr-type G domain. The segment at 445–452 (GHVDHGKT) is G1. Position 445–452 (445–452 (GHVDHGKT)) interacts with GTP. Residues 470–474 (GITQH) are G2. The tract at residues 491 to 494 (DTPG) is G3. GTP contacts are provided by residues 491 to 495 (DTPGH) and 545 to 548 (NKMD). Positions 545–548 (NKMD) are G4. The tract at residues 581 to 583 (SAK) is G5.

Belongs to the TRAFAC class translation factor GTPase superfamily. Classic translation factor GTPase family. IF-2 subfamily.

The protein resides in the cytoplasm. Functionally, one of the essential components for the initiation of protein synthesis. Protects formylmethionyl-tRNA from spontaneous hydrolysis and promotes its binding to the 30S ribosomal subunits. Also involved in the hydrolysis of GTP during the formation of the 70S ribosomal complex. This is Translation initiation factor IF-2 from Helicobacter pylori (strain G27).